A 318-amino-acid polypeptide reads, in one-letter code: tRNA-cytidine(32) 2-sulfurtransferase (318 aa).

The short motif at 52–57 is the PP-loop motif element; it reads SGGKDS. The [4Fe-4S] cluster site is built by C127, C130, and C218.

It belongs to the TtcA family. Homodimer. Requires Mg(2+) as cofactor. [4Fe-4S] cluster is required as a cofactor.

The protein resides in the cytoplasm. The catalysed reaction is cytidine(32) in tRNA + S-sulfanyl-L-cysteinyl-[cysteine desulfurase] + AH2 + ATP = 2-thiocytidine(32) in tRNA + L-cysteinyl-[cysteine desulfurase] + A + AMP + diphosphate + H(+). It functions in the pathway tRNA modification. In terms of biological role, catalyzes the ATP-dependent 2-thiolation of cytidine in position 32 of tRNA, to form 2-thiocytidine (s(2)C32). The sulfur atoms are provided by the cysteine/cysteine desulfurase (IscS) system. The polypeptide is tRNA-cytidine(32) 2-sulfurtransferase (Actinobacillus pleuropneumoniae serotype 5b (strain L20)).